We begin with the raw amino-acid sequence, 156 residues long: uncharacterized protein (156 aa).

Positions 1–12 (MSSRFARSNGNP) are enriched in polar residues. Positions 1–27 (MSSRFARSNGNPNHIRKRNHSPDPIGI) are disordered. Serine 21 is modified (phosphoserine).

It is found in the cytoplasm. The protein localises to the nucleus. This is an uncharacterized protein from Saccharomyces cerevisiae (strain ATCC 204508 / S288c) (Baker's yeast).